A 587-amino-acid polypeptide reads, in one-letter code: Glucosylglycerate phosphorylase (587 aa).

Catalysis depends on Asp236, which acts as the Nucleophile.

Belongs to the glycosyl hydrolase 13 family. Glucosylglycerate phosphorylase subfamily.

The catalysed reaction is (2R)-2-O-(alpha-D-glucopyranosyl)-glycerate + phosphate = (R)-glycerate + alpha-D-glucose 1-phosphate. Its function is as follows. Catalyzes the reversible phosphorolysis of glucosylglycerate into alpha-D-glucose 1-phosphate (Glc1P) and D-glycerate. May be a regulator of intracellular levels of glucosylglycerate, a compatible solute that primarily protects organisms facing salt stress and very specific nutritional constraints. Cannot catalyze the phosphorolysis of sucrose. In Spirochaeta thermophila (strain ATCC 700085 / DSM 6578 / Z-1203), this protein is Glucosylglycerate phosphorylase.